Here is a 358-residue protein sequence, read N- to C-terminus: WAT1-related protein At3g28080 (358 aa).

The next 10 membrane-spanning stretches (helical) occupy residues 12–32, 42–62, 81–101, 105–125, 137–157, 187–207, 219–239, 245–265, 283–303, and 308–328; these read AVFL…STLF, IYPF…PSLF, IGLL…GIEY, TLAS…AVIF, SVAK…VIFY, WLIG…SFIL, FTVS…IGLV, PSIW…TGII, LYLA…GTIF, and LYLG…VVMW. An EamA domain is found at 27-155; that stretch reads GLSTLFKVAT…LSLIGAFVVI (129 aa).

The protein belongs to the drug/metabolite transporter (DMT) superfamily. Plant drug/metabolite exporter (P-DME) (TC 2.A.7.4) family.

It localises to the membrane. The chain is WAT1-related protein At3g28080 from Arabidopsis thaliana (Mouse-ear cress).